A 64-amino-acid chain; its full sequence is Large ribosomal subunit protein bL33m (64 aa).

The protein belongs to the bacterial ribosomal protein bL33 family. In terms of assembly, component of the mitochondrial ribosome large subunit (39S) which comprises a 16S rRNA and about 50 distinct proteins.

The protein resides in the mitochondrion. This Drosophila melanogaster (Fruit fly) protein is Large ribosomal subunit protein bL33m (mRpL33).